We begin with the raw amino-acid sequence, 1161 residues long: Perforin-like protein 1 (1161 aa).

Residues 67-86 (LWITFVCLLTLHMFGLSSAV) traverse the membrane as a helical segment. The interval 154–329 (PEALNEVPTK…LGDSSALDLF (176 aa)) is disordered. Basic and acidic residues-rich tracts occupy residues 162–177 (TKVERNEFTEKGDKTE) and 184–194 (ADHKSLLEGRS). Positions 201–211 (PDDDFDFLFED) are enriched in acidic residues. Residues 222–234 (NKGTSSDETSPGD) are compositionally biased toward polar residues. Residues 238–249 (GEGSSASDSLLS) are compositionally biased toward low complexity. Asn-257 carries N-linked (GlcNAc...) asparagine glycosylation. Positions 264-283 (NQKRITHPKSKAQHQKKVTK) are enriched in basic residues. Over residues 309–322 (NTQADDSQRQSLGD) the composition is skewed to polar residues. An N-linked (GlcNAc...) asparagine glycan is attached at Asn-344. The disordered stretch occupies residues 353–381 (AANDGGLFSSSGMGPTGASDETSANPLGS). Over residues 361-378 (SSSGMGPTGASDETSANP) the composition is skewed to polar residues. Positions 463 to 817 (LSAVYTKATK…LTPQDLSALT (355 aa)) constitute an MACPF domain. Cys-539 and Cys-602 are joined by a disulfide. N-linked (GlcNAc...) asparagine glycosylation occurs at Asn-550. Residues 554 to 589 (YQNELSVDASLQGGDPIGLNSFSASTGYRDFAKEVS) traverse the membrane as a beta stranded segment. N-linked (GlcNAc...) asparagine glycosylation is present at Asn-618. A disulfide bond links Cys-643 and Cys-657. Residues 694–740 (RSEVEKMRNMGIDVKTQLKMQLGGVSGGAGQGTSSKKNQSSSEYQMN) form a beta stranded membrane-spanning segment. A disordered region spans residues 716 to 736 (GGVSGGAGQGTSSKKNQSSSE). Asn-755 carries N-linked (GlcNAc...) asparagine glycosylation. Cystine bridges form between Cys-845–Cys-900, Cys-874–Cys-881, Cys-928–Cys-981, Cys-957–Cys-964, Cys-1019–Cys-1080, and Cys-1047–Cys-1054. Residues Asn-1022, Asn-1050, and Asn-1111 are each glycosylated (N-linked (GlcNAc...) asparagine). The tract at residues 1094-1149 (VGKAKGNGKKKKGKKGKNKTNAPNEVEEGQQLGADSPSQVSVPADADSGPTSKTMS) is disordered. Residues 1099–1111 (GNGKKKKGKKGKN) show a composition bias toward basic residues.

This sequence belongs to the MPEG1 family. In terms of assembly, homooligomer; forms a homooligomeric pore.

The protein localises to the parasitophorous vacuole membrane. The protein resides in the cytoplasmic vesicle. Its subcellular location is the secretory vesicle. It is found in the microneme membrane. Its function is as follows. Pore-forming protein that promotes parasite exit from host cells: mediates formation of a pore in the parasitophorous vacuolar membrane, leading to membrane permeabilization, thereby facilitating parasite egress from host cells. May also form a pore in the host plasma membrane. Preferentially binds inner leaflet lipids, such as phosphatidylethanolamine (PE) or phosphatidylserine (PS). In Toxoplasma gondii (strain ATCC 50861 / VEG), this protein is Perforin-like protein 1.